A 512-amino-acid chain; its full sequence is 2,3-bisphosphoglycerate-independent phosphoglycerate mutase (512 aa).

Residues D12 and S62 each contribute to the Mn(2+) site. S62 functions as the Phosphoserine intermediate in the catalytic mechanism. Substrate is bound by residues H123, R154 to D155, R181, R187, R253 to R256, and K336. Mn(2+) contacts are provided by D403, H407, D444, H445, and H462.

Belongs to the BPG-independent phosphoglycerate mutase family. Monomer. It depends on Mn(2+) as a cofactor.

The enzyme catalyses (2R)-2-phosphoglycerate = (2R)-3-phosphoglycerate. It functions in the pathway carbohydrate degradation; glycolysis; pyruvate from D-glyceraldehyde 3-phosphate: step 3/5. Catalyzes the interconversion of 2-phosphoglycerate and 3-phosphoglycerate. The sequence is that of 2,3-bisphosphoglycerate-independent phosphoglycerate mutase from Onion yellows phytoplasma (strain OY-M).